A 90-amino-acid polypeptide reads, in one-letter code: Secretoglobin family 1D member 1 (90 aa).

Residues 1 to 21 (MRLSVCLLLLTLALCCYRANA) form the signal peptide.

As to quaternary structure, heterodimer of a lipophilin A and a lipophilin C (mammaglobin B) monomer associated head to head. In terms of tissue distribution, expressed in lachrymal gland, thymus, kidney, testis, ovary and salivary gland.

The protein resides in the secreted. Functionally, may bind androgens and other steroids, may also bind estramustine, a chemotherapeutic agent used for prostate cancer. May be under transcriptional regulation of steroid hormones. The protein is Secretoglobin family 1D member 1 (SCGB1D1) of Homo sapiens (Human).